The following is a 326-amino-acid chain: Putative [LysW]-lysine/[LysW]-ornithine hydrolase (326 aa).

H66 contacts Zn(2+). D68 is a catalytic residue. D90 contributes to the Zn(2+) binding site. The active-site Proton acceptor is the E117. 3 residues coordinate Zn(2+): E118, E139, and H297.

This sequence belongs to the peptidase M20A family. LysK subfamily. The cofactor is Zn(2+). Co(2+) serves as cofactor.

The protein localises to the cytoplasm. It carries out the reaction [amino-group carrier protein]-C-terminal-gamma-(L-lysyl)-L-glutamate + H2O = [amino-group carrier protein]-C-terminal-L-glutamate + L-lysine. It catalyses the reaction [amino-group carrier protein]-C-terminal-gamma-(L-ornithyl)-L-glutamate + H2O = [amino-group carrier protein]-C-terminal-L-glutamate + L-ornithine. Its pathway is amino-acid biosynthesis; L-lysine biosynthesis via AAA pathway; L-lysine from L-alpha-aminoadipate (Thermus route): step 5/5. It participates in amino-acid biosynthesis; L-arginine biosynthesis. Catalyzes the release of L-lysine from [LysW]-gamma-L-lysine and the release of L-ornithine from [LysW]-L-ornithine. The sequence is that of Putative [LysW]-lysine/[LysW]-ornithine hydrolase from Pyrococcus furiosus (strain ATCC 43587 / DSM 3638 / JCM 8422 / Vc1).